The primary structure comprises 178 residues: RNA pyrophosphohydrolase (178 aa).

Residues 18–171 (PYRPCVGLMV…KRKVYEQVVA (154 aa)) form the Nudix hydrolase domain. The short motif at 59-80 (GGIDKGEDPAQAALRELYEETG) is the Nudix box element.

The protein belongs to the Nudix hydrolase family. RppH subfamily. A divalent metal cation serves as cofactor.

Its function is as follows. Accelerates the degradation of transcripts by removing pyrophosphate from the 5'-end of triphosphorylated RNA, leading to a more labile monophosphorylated state that can stimulate subsequent ribonuclease cleavage. This Brucella canis (strain ATCC 23365 / NCTC 10854 / RM-666) protein is RNA pyrophosphohydrolase.